The chain runs to 415 residues: Peptide chain release factor subunit 1 (415 aa).

It belongs to the eukaryotic release factor 1 family. As to quaternary structure, heterodimer of two subunits, one of which binds GTP.

It is found in the cytoplasm. Directs the termination of nascent peptide synthesis (translation) in response to the termination codons UAA, UAG and UGA. The polypeptide is Peptide chain release factor subunit 1 (Thermococcus sibiricus (strain DSM 12597 / MM 739)).